The chain runs to 238 residues: CD63 antigen (238 aa).

Residues M1–K11 are Cytoplasmic-facing. A helical membrane pass occupies residues F12–G32. Residues V33–S51 are Extracellular-facing. Residues L52 to C72 traverse the membrane as a helical segment. At C73 to C81 the chain is on the cytoplasmic side. The helical transmembrane segment at L82–I102 threads the bilayer. At A103–I203 the chain is on the extracellular side. N-linked (GlcNAc...) asparagine glycans are attached at residues N116, N130, N150, and N172. Residues L204 to S224 form a helical membrane-spanning segment. At C225 to M238 the chain is on the cytoplasmic side. Residues G234 to M238 carry the Lysosomal targeting motif motif.

Belongs to the tetraspanin (TM4SF) family. As to quaternary structure, interacts with TIMP1 and ITGB1 and recruits TIMP1 to ITGB1. Interacts with CD9. Identified in a complex with CD9 and ITGB3. Interacts with PMEL. Interacts with KDR/VEGFR2; identified in a complex with ITGB1 and KDR/VEGFR2 and is required to recruit KDR to ITGB1 complexes. Interacts with SYT7. Post-translationally, palmitoylated at a low, basal level in unstimulated platelets. The level of palmitoylation increases when platelets are activated by thrombin (in vitro). As to expression, ubiquitous. Strongly expressed in kidney. Detected in spleen, bone marrow, peripheral blood mononuclear cells and macrophages.

Its subcellular location is the cell membrane. It is found in the lysosome membrane. The protein resides in the late endosome membrane. The protein localises to the endosome. It localises to the multivesicular body. Its subcellular location is the melanosome. It is found in the secreted. The protein resides in the extracellular exosome. The protein localises to the cell surface. Functions as a cell surface receptor for TIMP1 and plays a role in the activation of cellular signaling cascades. Plays a role in the activation of ITGB1 and integrin signaling, leading to the activation of AKT, FAK/PTK2 and MAP kinases. Promotes cell survival, reorganization of the actin cytoskeleton, cell adhesion, spreading and migration, via its role in the activation of AKT and FAK/PTK2. Plays a role in VEGFA signaling via its role in regulating the internalization of KDR/VEGFR2. Plays a role in intracellular vesicular transport processes, and is required for normal trafficking of the PMEL luminal domain that is essential for the development and maturation of melanocytes. Plays a role in the adhesion of leukocytes onto endothelial cells via its role in the regulation of SELP trafficking. May play a role in mast cell degranulation in response to Ms4a2/FceRI stimulation, but not in mast cell degranulation in response to other stimuli. This chain is CD63 antigen (Cd63), found in Mus musculus (Mouse).